A 931-amino-acid polypeptide reads, in one-letter code: Isoleucine--tRNA ligase (931 aa).

The 'HIGH' region signature appears at 57–67 (PYANGNIHIGH). Glu555 is a binding site for L-isoleucyl-5'-AMP. Positions 596–600 (KMSKS) match the 'KMSKS' region motif. ATP is bound at residue Lys599. 4 residues coordinate Zn(2+): Cys890, Cys893, Cys910, and Cys913.

The protein belongs to the class-I aminoacyl-tRNA synthetase family. IleS type 1 subfamily. Monomer. Zn(2+) is required as a cofactor.

Its subcellular location is the cytoplasm. It carries out the reaction tRNA(Ile) + L-isoleucine + ATP = L-isoleucyl-tRNA(Ile) + AMP + diphosphate. Its function is as follows. Catalyzes the attachment of isoleucine to tRNA(Ile). As IleRS can inadvertently accommodate and process structurally similar amino acids such as valine, to avoid such errors it has two additional distinct tRNA(Ile)-dependent editing activities. One activity is designated as 'pretransfer' editing and involves the hydrolysis of activated Val-AMP. The other activity is designated 'posttransfer' editing and involves deacylation of mischarged Val-tRNA(Ile). This chain is Isoleucine--tRNA ligase, found in Limosilactobacillus reuteri subsp. reuteri (strain JCM 1112) (Lactobacillus reuteri).